The primary structure comprises 560 residues: Endogenous retrovirus group K member 18 Env polyprotein (560 aa).

Residues 355–375 (FIFTLIAVIMGLIAVTATAAV) are fusion peptide. A helical membrane pass occupies residues 522 to 542 (IRSTMIINLILIVVCLFCLLL).

The protein belongs to the beta type-B retroviral envelope protein family. HERV class-II K(HML-2) env subfamily. The surface (SU) and transmembrane (TM) proteins form a heterodimer. SU and TM are attached by noncovalent interactions or by a labile interchain disulfide bond. In terms of processing, specific enzymatic cleavages in vivo yield the mature SU and TM proteins. As to expression, expressed at higher level in the thymus. Expressed at lower level in peripheral blood lymphocytes.

Its subcellular location is the cell membrane. It localises to the virion. In terms of biological role, retroviral envelope proteins mediate receptor recognition and membrane fusion during early infection. Endogenous envelope proteins may have kept, lost or modified their original function during evolution. This envelope protein has superantigenic properties. Functionally, SU mediates receptor recognition. TM anchors the envelope heterodimer to the viral membrane through one transmembrane domain. The other hydrophobic domain, called fusion peptide, mediates fusion of the viral membrane with the target cell membrane. This Homo sapiens (Human) protein is Endogenous retrovirus group K member 18 Env polyprotein (ERVK-18).